Consider the following 186-residue polypeptide: Adenine phosphoribosyltransferase (186 aa).

132 to 136 (ATGGS) lines the AMP pocket.

The protein belongs to the purine/pyrimidine phosphoribosyltransferase family. In terms of assembly, homodimer. Mg(2+) is required as a cofactor.

The protein localises to the cytoplasm. It localises to the nucleus. It carries out the reaction AMP + diphosphate = 5-phospho-alpha-D-ribose 1-diphosphate + adenine. Its pathway is purine metabolism; AMP biosynthesis via salvage pathway; AMP from adenine: step 1/1. Its function is as follows. Catalyzes a salvage reaction resulting in the formation of AMP, that is energically less costly than de novo synthesis. The polypeptide is Adenine phosphoribosyltransferase (APT1) (Debaryomyces hansenii (strain ATCC 36239 / CBS 767 / BCRC 21394 / JCM 1990 / NBRC 0083 / IGC 2968) (Yeast)).